The primary structure comprises 111 residues: Cytochrome b-c1 complex subunit 7 (111 aa).

N-acetylalanine is present on Ala2. Lys12 carries the N6-acetyllysine; alternate modification. An N6-succinyllysine; alternate modification is found at Lys12. Lys19 bears the N6-acetyllysine mark. Lys78 carries the post-translational modification N6-acetyllysine; alternate. N6-succinyllysine; alternate is present on Lys78. Residues Lys83 and Lys96 each carry the N6-acetyllysine modification.

This sequence belongs to the UQCRB/QCR7 family. As to quaternary structure, component of the ubiquinol-cytochrome c oxidoreductase (cytochrome b-c1 complex, complex III, CIII), a multisubunit enzyme composed of 11 subunits. The complex is composed of 3 respiratory subunits cytochrome b, cytochrome c1 and Rieske protein UQCRFS1, 2 core protein subunits UQCRC1/QCR1 and UQCRC2/QCR2, and 6 low-molecular weight protein subunits UQCRH/QCR6, UQCRB/QCR7, UQCRQ/QCR8, UQCR10/QCR9, UQCR11/QCR10 and subunit 9, the cleavage product of Rieske protein UQCRFS1. The complex exists as an obligatory dimer and forms supercomplexes (SCs) in the inner mitochondrial membrane with NADH-ubiquinone oxidoreductase (complex I, CI) and cytochrome c oxidase (complex IV, CIV), resulting in different assemblies (supercomplex SCI(1)III(2)IV(1) and megacomplex MCI(2)III(2)IV(2)).

The protein localises to the mitochondrion inner membrane. Functionally, component of the ubiquinol-cytochrome c oxidoreductase, a multisubunit transmembrane complex that is part of the mitochondrial electron transport chain which drives oxidative phosphorylation. The respiratory chain contains 3 multisubunit complexes succinate dehydrogenase (complex II, CII), ubiquinol-cytochrome c oxidoreductase (cytochrome b-c1 complex, complex III, CIII) and cytochrome c oxidase (complex IV, CIV), that cooperate to transfer electrons derived from NADH and succinate to molecular oxygen, creating an electrochemical gradient over the inner membrane that drives transmembrane transport and the ATP synthase. The cytochrome b-c1 complex catalyzes electron transfer from ubiquinol to cytochrome c, linking this redox reaction to translocation of protons across the mitochondrial inner membrane, with protons being carried across the membrane as hydrogens on the quinol. In the process called Q cycle, 2 protons are consumed from the matrix, 4 protons are released into the intermembrane space and 2 electrons are passed to cytochrome c. The sequence is that of Cytochrome b-c1 complex subunit 7 (UQCRB) from Homo sapiens (Human).